A 326-amino-acid polypeptide reads, in one-letter code: Putative ribose-phosphate pyrophosphokinase 2 (326 aa).

Residues 43 to 45 (DGE) and 102 to 103 (RQ) contribute to the ATP site. Residue histidine 136 coordinates Mg(2+). Residues aspartate 225 and 229-233 (NTGKT) each bind D-ribose 5-phosphate.

Homohexamer. The cofactor is Mg(2+).

Its subcellular location is the cytoplasm. It catalyses the reaction D-ribose 5-phosphate + ATP = 5-phospho-alpha-D-ribose 1-diphosphate + AMP + H(+). The protein operates within metabolic intermediate biosynthesis; 5-phospho-alpha-D-ribose 1-diphosphate biosynthesis; 5-phospho-alpha-D-ribose 1-diphosphate from D-ribose 5-phosphate (route I): step 1/1. Its function is as follows. Involved in the biosynthesis of the central metabolite phospho-alpha-D-ribosyl-1-pyrophosphate (PRPP) via the transfer of pyrophosphoryl group from ATP to 1-hydroxyl of ribose-5-phosphate (Rib-5-P). This is Putative ribose-phosphate pyrophosphokinase 2 from Streptococcus pyogenes serotype M6 (strain ATCC BAA-946 / MGAS10394).